Consider the following 364-residue polypeptide: tRNA/tmRNA (uracil-C(5))-methyltransferase (364 aa).

Residues Gln188, Tyr216, Asn221, Glu237, and Asp297 each coordinate S-adenosyl-L-methionine. Cys322 serves as the catalytic Nucleophile. Glu356 acts as the Proton acceptor in catalysis.

The protein belongs to the class I-like SAM-binding methyltransferase superfamily. RNA M5U methyltransferase family. TrmA subfamily.

It catalyses the reaction uridine(54) in tRNA + S-adenosyl-L-methionine = 5-methyluridine(54) in tRNA + S-adenosyl-L-homocysteine + H(+). It carries out the reaction uridine(341) in tmRNA + S-adenosyl-L-methionine = 5-methyluridine(341) in tmRNA + S-adenosyl-L-homocysteine + H(+). Its function is as follows. Dual-specificity methyltransferase that catalyzes the formation of 5-methyluridine at position 54 (m5U54) in all tRNAs, and that of position 341 (m5U341) in tmRNA (transfer-mRNA). This is tRNA/tmRNA (uracil-C(5))-methyltransferase from Teredinibacter turnerae (strain ATCC 39867 / T7901).